A 193-amino-acid chain; its full sequence is Acyl carrier protein phosphodiesterase (193 aa).

This sequence belongs to the AcpH family.

The enzyme catalyses holo-[ACP] + H2O = apo-[ACP] + (R)-4'-phosphopantetheine + H(+). Its function is as follows. Converts holo-ACP to apo-ACP by hydrolytic cleavage of the phosphopantetheine prosthetic group from ACP. This is Acyl carrier protein phosphodiesterase from Serratia proteamaculans (strain 568).